We begin with the raw amino-acid sequence, 595 residues long: Beta-(1--&gt;2)glucan export ATP-binding/permease protein NdvA (595 aa).

Helical transmembrane passes span 21–41 (FLLI…EPIL), 56–76 (LVTL…YVLV), 129–149 (IWLE…VLVP), 158–178 (LSIV…LVMQ), and 252–272 (ISIV…QLSV). Residues 21–301 (FLLICTANIT…ISGFINLAVS (281 aa)) form the ABC transmembrane type-1 domain. One can recognise an ABC transporter domain in the interval 335-569 (IQFHHVTYEF…DGHFYKLLKR (235 aa)). 368–375 (GPTGAGKT) provides a ligand contact to ATP.

This sequence belongs to the ABC transporter superfamily. Beta-(1--&gt;2)glucan exporter (TC 3.A.1.108.1) family. Homodimer.

It localises to the cell inner membrane. It catalyses the reaction [(1-&gt;2)-beta-D-glucosyl](n)(in) + ATP + H2O = [(1-&gt;2)-beta-D-glucosyl](n)(out) + ADP + phosphate + H(+). Functionally, involved in beta-(1--&gt;2)glucan export. Transmembrane domains (TMD) form a pore in the inner membrane and the ATP-binding domain (NBD) is responsible for energy generation. This chain is Beta-(1--&gt;2)glucan export ATP-binding/permease protein NdvA, found in Bartonella bacilliformis.